Reading from the N-terminus, the 920-residue chain is Phosphoenolpyruvate carboxylase (920 aa).

Residues His-138 and Lys-583 contribute to the active site.

This sequence belongs to the PEPCase type 1 family. Mg(2+) serves as cofactor.

The enzyme catalyses oxaloacetate + phosphate = phosphoenolpyruvate + hydrogencarbonate. Forms oxaloacetate, a four-carbon dicarboxylic acid source for the tricarboxylic acid cycle. This Streptococcus pyogenes serotype M5 (strain Manfredo) protein is Phosphoenolpyruvate carboxylase.